Here is a 208-residue protein sequence, read N- to C-terminus: dITP/XTP pyrophosphatase (208 aa).

7–12 is a substrate binding site; the sequence is SNNAKK. E39 and D68 together coordinate Mg(2+). D68 acts as the Proton acceptor in catalysis. Substrate is bound by residues S69, 162-165, K185, and 190-191; these read FGYD and HR.

Belongs to the HAM1 NTPase family. In terms of assembly, homodimer. Mg(2+) is required as a cofactor.

It carries out the reaction XTP + H2O = XMP + diphosphate + H(+). The catalysed reaction is dITP + H2O = dIMP + diphosphate + H(+). It catalyses the reaction ITP + H2O = IMP + diphosphate + H(+). Functionally, pyrophosphatase that catalyzes the hydrolysis of nucleoside triphosphates to their monophosphate derivatives, with a high preference for the non-canonical purine nucleotides XTP (xanthosine triphosphate), dITP (deoxyinosine triphosphate) and ITP. Seems to function as a house-cleaning enzyme that removes non-canonical purine nucleotides from the nucleotide pool, thus preventing their incorporation into DNA/RNA and avoiding chromosomal lesions. This is dITP/XTP pyrophosphatase from Methylibium petroleiphilum (strain ATCC BAA-1232 / LMG 22953 / PM1).